The sequence spans 575 residues: Sulfite reductase [NADPH] hemoprotein beta-component (575 aa).

Residues Cys-440, Cys-446, Cys-485, and Cys-489 each contribute to the [4Fe-4S] cluster site. Position 489 (Cys-489) interacts with siroheme.

Belongs to the nitrite and sulfite reductase 4Fe-4S domain family. Alpha(8)-beta(8). The alpha component is a flavoprotein, the beta component is a hemoprotein. It depends on siroheme as a cofactor. Requires [4Fe-4S] cluster as cofactor.

It catalyses the reaction hydrogen sulfide + 3 NADP(+) + 3 H2O = sulfite + 3 NADPH + 4 H(+). It functions in the pathway sulfur metabolism; hydrogen sulfide biosynthesis; hydrogen sulfide from sulfite (NADPH route): step 1/1. Functionally, component of the sulfite reductase complex that catalyzes the 6-electron reduction of sulfite to sulfide. This is one of several activities required for the biosynthesis of L-cysteine from sulfate. This Chromohalobacter salexigens (strain ATCC BAA-138 / DSM 3043 / CIP 106854 / NCIMB 13768 / 1H11) protein is Sulfite reductase [NADPH] hemoprotein beta-component.